The chain runs to 498 residues: Glycerol kinase (498 aa).

Residue Thr-13 participates in ADP binding. 3 residues coordinate ATP: Thr-13, Thr-14, and Ser-15. Thr-13 serves as a coordination point for sn-glycerol 3-phosphate. Arg-17 contacts ADP. The sn-glycerol 3-phosphate site is built by Arg-83, Glu-84, Tyr-135, and Asp-244. The glycerol site is built by Arg-83, Glu-84, Tyr-135, Asp-244, and Gln-245. Positions 266 and 309 each coordinate ADP. Residues Thr-266, Gly-309, Gln-313, and Gly-410 each coordinate ATP. ADP contacts are provided by Gly-410 and Asn-414.

Belongs to the FGGY kinase family.

It carries out the reaction glycerol + ATP = sn-glycerol 3-phosphate + ADP + H(+). The protein operates within polyol metabolism; glycerol degradation via glycerol kinase pathway; sn-glycerol 3-phosphate from glycerol: step 1/1. With respect to regulation, inhibited by fructose 1,6-bisphosphate (FBP). Key enzyme in the regulation of glycerol uptake and metabolism. Catalyzes the phosphorylation of glycerol to yield sn-glycerol 3-phosphate. This is Glycerol kinase from Koribacter versatilis (strain Ellin345).